The primary structure comprises 617 residues: Elongation factor 4 (617 aa).

The region spanning alanine 17 to valine 198 is the tr-type G domain. Residues aspartate 29 to threonine 34 and asparagine 145 to aspartate 148 contribute to the GTP site.

It belongs to the TRAFAC class translation factor GTPase superfamily. Classic translation factor GTPase family. LepA subfamily.

Its subcellular location is the cell membrane. It catalyses the reaction GTP + H2O = GDP + phosphate + H(+). Its function is as follows. Required for accurate and efficient protein synthesis under certain stress conditions. May act as a fidelity factor of the translation reaction, by catalyzing a one-codon backward translocation of tRNAs on improperly translocated ribosomes. Back-translocation proceeds from a post-translocation (POST) complex to a pre-translocation (PRE) complex, thus giving elongation factor G a second chance to translocate the tRNAs correctly. Binds to ribosomes in a GTP-dependent manner. The sequence is that of Elongation factor 4 from Paenarthrobacter aurescens (strain TC1).